The sequence spans 96 residues: Small ribosomal subunit protein bS6c (96 aa).

The protein belongs to the bacterial ribosomal protein bS6 family.

It is found in the plastid. The protein localises to the chloroplast. Its function is as follows. Binds together with bS18 to 16S ribosomal RNA. This is Small ribosomal subunit protein bS6c (rps6) from Guillardia theta (Cryptophyte).